We begin with the raw amino-acid sequence, 438 residues long: Transmembrane protease serine 11F (438 aa).

At 1-32 the chain is on the cytoplasmic side; it reads MMYAPVEFSEAEFSRAEYQRKQQFWDSVRLAL. The chain crosses the membrane as a helical; Signal-anchor for type II membrane protein span at residues 33–53; it reads FTLAIVAIIGIAIGIVTHFVV. Residues 54-438 lie on the Extracellular side of the membrane; that stretch reads EDDKSFYYLA…RDWIASKTGM (385 aa). The SEA domain occupies 57–175; sequence KSFYYLASFK…PSFRLTPIDS (119 aa). The Peptidase S1 domain occupies 206-437; it reads IVQGRETAME…YRDWIASKTG (232 aa). C233 and C249 are joined by a disulfide. Catalysis depends on charge relay system residues H248 and D293. Intrachain disulfides connect C358/C374 and C385/C413. The active-site Charge relay system is S389.

It belongs to the peptidase S1 family.

The protein resides in the membrane. Its function is as follows. Probable serine protease. In Homo sapiens (Human), this protein is Transmembrane protease serine 11F (TMPRSS11F).